The chain runs to 332 residues: Holliday junction branch migration complex subunit RuvB (332 aa).

Residues 1 to 181 (MTRFLDSDAM…FGITGHMEYY (181 aa)) are large ATPase domain (RuvB-L). ATP contacts are provided by residues Leu20, Arg21, Gly62, Lys65, Thr66, Thr67, 128-130 (EDF), Arg171, Tyr181, and Arg218. A Mg(2+)-binding site is contributed by Thr66. The small ATPAse domain (RuvB-S) stretch occupies residues 182-252 (EENDLTEIIE…ITDKALTMLD (71 aa)). Positions 255 to 332 (HEGLDYVDQK…EHLGYQRFDK (78 aa)) are head domain (RuvB-H). DNA is bound by residues Arg291, Arg310, Arg312, and Arg315.

Belongs to the RuvB family. In terms of assembly, homohexamer. Forms an RuvA(8)-RuvB(12)-Holliday junction (HJ) complex. HJ DNA is sandwiched between 2 RuvA tetramers; dsDNA enters through RuvA and exits via RuvB. An RuvB hexamer assembles on each DNA strand where it exits the tetramer. Each RuvB hexamer is contacted by two RuvA subunits (via domain III) on 2 adjacent RuvB subunits; this complex drives branch migration. In the full resolvosome a probable DNA-RuvA(4)-RuvB(12)-RuvC(2) complex forms which resolves the HJ.

The protein resides in the cytoplasm. It carries out the reaction ATP + H2O = ADP + phosphate + H(+). Its function is as follows. The RuvA-RuvB-RuvC complex processes Holliday junction (HJ) DNA during genetic recombination and DNA repair, while the RuvA-RuvB complex plays an important role in the rescue of blocked DNA replication forks via replication fork reversal (RFR). RuvA specifically binds to HJ cruciform DNA, conferring on it an open structure. The RuvB hexamer acts as an ATP-dependent pump, pulling dsDNA into and through the RuvAB complex. RuvB forms 2 homohexamers on either side of HJ DNA bound by 1 or 2 RuvA tetramers; 4 subunits per hexamer contact DNA at a time. Coordinated motions by a converter formed by DNA-disengaged RuvB subunits stimulates ATP hydrolysis and nucleotide exchange. Immobilization of the converter enables RuvB to convert the ATP-contained energy into a lever motion, pulling 2 nucleotides of DNA out of the RuvA tetramer per ATP hydrolyzed, thus driving DNA branch migration. The RuvB motors rotate together with the DNA substrate, which together with the progressing nucleotide cycle form the mechanistic basis for DNA recombination by continuous HJ branch migration. Branch migration allows RuvC to scan DNA until it finds its consensus sequence, where it cleaves and resolves cruciform DNA. This Streptococcus agalactiae serotype V (strain ATCC BAA-611 / 2603 V/R) protein is Holliday junction branch migration complex subunit RuvB.